The chain runs to 556 residues: Peptidylarginine deiminase (556 aa).

The N-terminal stretch at 1 to 23 is a signal peptide; the sequence is MKKLLQAKALILALGLFQLPAIA. A propeptide spanning residues 24–43 is cleaved from the precursor; it reads QTQMQADRTNGQFATEEMQR. The Amidino-cysteine intermediate role is filled by cysteine 351.

Belongs to the agmatine deiminase family. FAD serves as cofactor. Requires FMN as cofactor.

Its subcellular location is the secreted. Inhibited by cysteine and TLCK. Inhibited by high concentration of thiourea and thio-L-citrulline. Its function is as follows. Deiminates the guanidino group of C-terminal arginine residues on a variety of peptides, including the vasoregulatory peptide-hormone bradykinin, to yield ammonia and a citrulline residue. May promote the growth of the pathogen in the periodontal pocket by producing ammonia, ammonia having a protective effect during acidic cleaning cycles in the mouth. The polypeptide is Peptidylarginine deiminase (Porphyromonas gingivalis (strain ATCC BAA-308 / W83)).